Here is a 291-residue protein sequence, read N- to C-terminus: Tryptophan synthase alpha chain (291 aa).

Residues glutamate 69 and aspartate 80 each act as proton acceptor in the active site.

Belongs to the TrpA family. In terms of assembly, tetramer of two alpha and two beta chains.

It carries out the reaction (1S,2R)-1-C-(indol-3-yl)glycerol 3-phosphate + L-serine = D-glyceraldehyde 3-phosphate + L-tryptophan + H2O. The protein operates within amino-acid biosynthesis; L-tryptophan biosynthesis; L-tryptophan from chorismate: step 5/5. Its function is as follows. The alpha subunit is responsible for the aldol cleavage of indoleglycerol phosphate to indole and glyceraldehyde 3-phosphate. This chain is Tryptophan synthase alpha chain, found in Bifidobacterium longum (strain NCC 2705).